The primary structure comprises 232 residues: Large ribosomal subunit protein uL1 (232 aa).

The protein belongs to the universal ribosomal protein uL1 family. As to quaternary structure, part of the 50S ribosomal subunit.

Functionally, binds directly to 23S rRNA. The L1 stalk is quite mobile in the ribosome, and is involved in E site tRNA release. Its function is as follows. Protein L1 is also a translational repressor protein, it controls the translation of the L11 operon by binding to its mRNA. The protein is Large ribosomal subunit protein uL1 of Aliarcobacter butzleri (strain RM4018) (Arcobacter butzleri).